Consider the following 247-residue polypeptide: Type III pantothenate kinase (247 aa).

6–13 (DVGNTSIY) contacts ATP. A substrate-binding site is contributed by 102 to 105 (GADL). The Proton acceptor role is filled by aspartate 104. Aspartate 122 serves as a coordination point for K(+). Threonine 125 lines the ATP pocket. Threonine 176 serves as a coordination point for substrate.

The protein belongs to the type III pantothenate kinase family. In terms of assembly, homodimer. Requires NH4(+) as cofactor. K(+) is required as a cofactor.

It localises to the cytoplasm. The enzyme catalyses (R)-pantothenate + ATP = (R)-4'-phosphopantothenate + ADP + H(+). The protein operates within cofactor biosynthesis; coenzyme A biosynthesis; CoA from (R)-pantothenate: step 1/5. Its function is as follows. Catalyzes the phosphorylation of pantothenate (Pan), the first step in CoA biosynthesis. The chain is Type III pantothenate kinase from Acholeplasma laidlawii (strain PG-8A).